The chain runs to 255 residues: Large ribosomal subunit protein uL4 (255 aa).

Belongs to the universal ribosomal protein uL4 family. As to quaternary structure, part of the 50S ribosomal subunit.

Its function is as follows. One of the primary rRNA binding proteins, this protein initially binds near the 5'-end of the 23S rRNA. It is important during the early stages of 50S assembly. It makes multiple contacts with different domains of the 23S rRNA in the assembled 50S subunit and ribosome. In terms of biological role, forms part of the polypeptide exit tunnel. The chain is Large ribosomal subunit protein uL4 from Thermococcus gammatolerans (strain DSM 15229 / JCM 11827 / EJ3).